We begin with the raw amino-acid sequence, 276 residues long: Large ribosomal subunit protein uL2c (276 aa).

Disordered regions lie at residues 1–51 (MAIR…GIIT) and 224–276 (VVMN…RRRK). Composition is skewed to polar residues over residues 7-18 (RTYTPSTRNRPI) and 27-37 (SNPQKKLTSGQ).

This sequence belongs to the universal ribosomal protein uL2 family. As to quaternary structure, part of the 50S ribosomal subunit.

Its subcellular location is the plastid. It localises to the chloroplast. This chain is Large ribosomal subunit protein uL2c (rpl2), found in Cycas taitungensis (Prince sago).